The following is a 492-amino-acid chain: Mitochondrial distribution and morphology protein 12 (492 aa).

Residues 1-492 form the SMP-LTD domain; the sequence is MSIDLNWETV…VYPSFWTFLV (492 aa). 3 disordered regions span residues 68-158, 199-301, and 379-434; these read DFYE…STPG, LEGH…GHPR, and AVGG…GSGN. Residues 78-90 show a composition bias toward acidic residues; that stretch reads VASDDSEGEEDAV. A compositionally biased stretch (gly residues) spans 130–139; sequence SPGGPGGPGM. A compositionally biased stretch (low complexity) spans 246–257; that stretch reads LNPNSLAPPSSS. Polar residues predominate over residues 270-285; it reads TTPAPGSATALSGSNE. Over residues 387–400 the composition is skewed to low complexity; the sequence is GLSSPGEGPSQAQG. Positions 401–415 are enriched in gly residues; sequence QGQGQGQGQGQGQTP. The segment covering 416–428 has biased composition (low complexity); that stretch reads GAGQQKQQKKQAG.

It belongs to the MDM12 family. Component of the ER-mitochondria encounter structure (ERMES) or MDM complex, composed of MMM1, MDM10, MDM12 and MDM34. An MMM1 homodimer associates with one molecule of MDM12 on each side in a pairwise head-to-tail manner, and the SMP-LTD domains of MMM1 and MDM12 generate a continuous hydrophobic tunnel for phospholipid trafficking.

The protein resides in the mitochondrion outer membrane. It localises to the endoplasmic reticulum membrane. Its function is as follows. Component of the ERMES/MDM complex, which serves as a molecular tether to connect the endoplasmic reticulum (ER) and mitochondria. Components of this complex are involved in the control of mitochondrial shape and protein biogenesis, and function in nonvesicular lipid trafficking between the ER and mitochondria. MDM12 is required for the interaction of the ER-resident membrane protein MMM1 and the outer mitochondrial membrane-resident beta-barrel protein MDM10. The MDM12-MMM1 subcomplex functions in the major beta-barrel assembly pathway that is responsible for biogenesis of all mitochondrial outer membrane beta-barrel proteins, and acts in a late step after the SAM complex. The MDM10-MDM12-MMM1 subcomplex further acts in the TOM40-specific pathway after the action of the MDM12-MMM1 complex. Essential for establishing and maintaining the structure of mitochondria and maintenance of mtDNA nucleoids. The sequence is that of Mitochondrial distribution and morphology protein 12 from Chaetomium globosum (strain ATCC 6205 / CBS 148.51 / DSM 1962 / NBRC 6347 / NRRL 1970) (Soil fungus).